The following is a 180-amino-acid chain: 4-hydroxy-3-methylbut-2-enyl diphosphate reductase (180 aa).

Cys12 contributes to the [4Fe-4S] cluster binding site. (2E)-4-hydroxy-3-methylbut-2-enyl diphosphate contacts are provided by His41 and His74. 2 residues coordinate dimethylallyl diphosphate: His41 and His74. 2 residues coordinate isopentenyl diphosphate: His41 and His74. Cys96 contacts [4Fe-4S] cluster. His124 contacts (2E)-4-hydroxy-3-methylbut-2-enyl diphosphate. A dimethylallyl diphosphate-binding site is contributed by His124. His124 is an isopentenyl diphosphate binding site. Glu126 (proton donor) is an active-site residue. Position 168 (Thr168) interacts with (2E)-4-hydroxy-3-methylbut-2-enyl diphosphate.

This sequence belongs to the IspH family. The cofactor is [4Fe-4S] cluster.

The catalysed reaction is isopentenyl diphosphate + 2 oxidized [2Fe-2S]-[ferredoxin] + H2O = (2E)-4-hydroxy-3-methylbut-2-enyl diphosphate + 2 reduced [2Fe-2S]-[ferredoxin] + 2 H(+). It carries out the reaction dimethylallyl diphosphate + 2 oxidized [2Fe-2S]-[ferredoxin] + H2O = (2E)-4-hydroxy-3-methylbut-2-enyl diphosphate + 2 reduced [2Fe-2S]-[ferredoxin] + 2 H(+). It functions in the pathway isoprenoid biosynthesis; dimethylallyl diphosphate biosynthesis; dimethylallyl diphosphate from (2E)-4-hydroxy-3-methylbutenyl diphosphate: step 1/1. It participates in isoprenoid biosynthesis; isopentenyl diphosphate biosynthesis via DXP pathway; isopentenyl diphosphate from 1-deoxy-D-xylulose 5-phosphate: step 6/6. In terms of biological role, catalyzes the conversion of 1-hydroxy-2-methyl-2-(E)-butenyl 4-diphosphate (HMBPP) into a mixture of isopentenyl diphosphate (IPP) and dimethylallyl diphosphate (DMAPP). Acts in the terminal step of the DOXP/MEP pathway for isoprenoid precursor biosynthesis. The sequence is that of 4-hydroxy-3-methylbut-2-enyl diphosphate reductase from Pseudomonas fluorescens.